We begin with the raw amino-acid sequence, 233 residues long: 7-cyano-7-deazaguanine synthase (233 aa).

Position 17 to 27 (17 to 27) interacts with ATP; sequence LSGGLDSMVCA. Zn(2+) is bound by residues Cys-196, Cys-206, Cys-209, and Cys-212.

This sequence belongs to the QueC family. Zn(2+) is required as a cofactor.

It carries out the reaction 7-carboxy-7-deazaguanine + NH4(+) + ATP = 7-cyano-7-deazaguanine + ADP + phosphate + H2O + H(+). It participates in purine metabolism; 7-cyano-7-deazaguanine biosynthesis. Its function is as follows. Catalyzes the ATP-dependent conversion of 7-carboxy-7-deazaguanine (CDG) to 7-cyano-7-deazaguanine (preQ(0)). The sequence is that of 7-cyano-7-deazaguanine synthase from Novosphingobium aromaticivorans (strain ATCC 700278 / DSM 12444 / CCUG 56034 / CIP 105152 / NBRC 16084 / F199).